The chain runs to 89 residues: GTP cyclohydrolase 1 feedback regulatory protein (89 aa).

This sequence belongs to the GFRP family. In terms of assembly, homopentamer. Forms a complex with GCH1 where a GCH1 homodecamer is sandwiched by two GFRP homopentamers.

The protein localises to the nucleus. It is found in the nucleus membrane. It localises to the cytoplasm. The protein resides in the cytosol. Mediates tetrahydrobiopterin inhibition of GTP cyclohydrolase 1. This chain is GTP cyclohydrolase 1 feedback regulatory protein (gchfr), found in Danio rerio (Zebrafish).